Here is a 503-residue protein sequence, read N- to C-terminus: MALGRAFSVAVRGLDGEIVEIEADITSGLPGVHLVGLPDAALQESRDRVRAAVTNCGNSWPMARLTLALSPATLPKMGSVYDIALAAAVLSAQQKKPWERLENTLLLGELSLDGRVRPVRGVLPAVLAAKRDGWPAVVVPADNLPEASLVDGIDVRGVRTLGQLQSWLRGSTGLAGRITTADTTPESAADLADVVGQSQARFAVEVAAAGAHHLMLTVPPGVGKTMLAQRLPGLLPSLSGSESLEVTAIHSVAGLLSGDTPLITRPPFVAPHHSSSVAALVGGGSGMARPGAVSRAHRGVLFLDECAEISLSALEALRTPLEDGEIRLARRDGVACYPARFQLVLAANPCPCAPADPQDCICAAATKRRYLGKLSGPLLDRVDLRVQMHRLRAGAFSAADGESTSQVRQRVALAREAAAQRWRPHGFRTNAEVSGPLLRRKFRPSSAAMLPLRTALDRGLLSIRGVDRTLRVAWSLADLAGRTSPGIDEVAAALSFRQTGARR.

This sequence belongs to the Mg-chelatase subunits D/I family. ComM subfamily.

This is an uncharacterized protein from Mycobacterium tuberculosis (strain CDC 1551 / Oshkosh).